We begin with the raw amino-acid sequence, 529 residues long: Serine hydroxymethyltransferase 3, chloroplastic (529 aa).

The transit peptide at 1–60 directs the protein to the chloroplast; sequence MQACCGGNSMASLQQPGRVQGSVFPPIMPPVTKFSQQLKFNISKPFRSSFLKRNLVSEMR. K314 is modified (N6-(pyridoxal phosphate)lysine).

It belongs to the SHMT family. In terms of assembly, homotetramer. Pyridoxal 5'-phosphate is required as a cofactor.

It is found in the plastid. The protein resides in the chloroplast. It carries out the reaction (6R)-5,10-methylene-5,6,7,8-tetrahydrofolate + glycine + H2O = (6S)-5,6,7,8-tetrahydrofolate + L-serine. It participates in one-carbon metabolism; tetrahydrofolate interconversion. Its activity is regulated as follows. Inhibited by 5-CH3-H4PteGlu1/5 and 5-HCO-H4PteGlu1/5 in vitro. In terms of biological role, catalyzes the interconversion of serine and glycine and directs the hydroxymethyl moiety of serine into the metabolic network of H4PteGlu(n)-bound one-carbon units. The protein is Serine hydroxymethyltransferase 3, chloroplastic of Arabidopsis thaliana (Mouse-ear cress).